We begin with the raw amino-acid sequence, 457 residues long: Multidrug resistance protein MdtK (457 aa).

Helical transmembrane passes span 11–31 (LLALAIPVILAQIAQTAMGFV), 53–73 (IWLPAILFGHGLLLALTPVIA), 93–113 (WLAGFVSVLIMLVLWNAGYII), 127–147 (AVGYLRALLWGAPGYLFFQVA), 160–180 (GMVMGFIGLLVNIPVNYIFIY), 189–209 (GGVGCGVATAAVYWVMFLAMV), 243–263 (LPIALALFFEVTLFAVVALLV), 276–296 (IALNFSSLMFVLPMSLAAAVT), 314–334 (AARTGLMVGVCMATLTAIFTV), 350–370 (VVTLAAHLMLLAAVYQISDSI), 387–407 (IFYITFTAYWVLGLPSGYILA), and 418–438 (PAGFWIGFIIGLTSAAIMMML).

The protein belongs to the multi antimicrobial extrusion (MATE) (TC 2.A.66.1) family. MdtK subfamily.

The protein resides in the cell inner membrane. Functionally, multidrug efflux pump that functions probably as a Na(+)/drug antiporter. The polypeptide is Multidrug resistance protein MdtK (Escherichia coli O127:H6 (strain E2348/69 / EPEC)).